We begin with the raw amino-acid sequence, 529 residues long: FAD-binding monooxygenase BOA2 (529 aa).

FAD contacts are provided by residues 58 to 61 (VWWK), 70 to 71 (DI), and Y76. Residue 68–70 (ACD) coordinates NADP(+). Residues 198–204 (TGPSACQ) and 221–222 (RS) contribute to the NADP(+) site.

It belongs to the FAD-binding monooxygenase family. It depends on FAD as a cofactor.

It functions in the pathway polyketide biosynthesis. FAD-binding monooxygenase; part of the gene cluster A that mediates the biosynthesis of botcinic acid and its botcinin derivatives, acetate-derived polyketides that contribute to virulence when combined with the sesquiterpene botrydial. Botcinic acid and its derivatives have been shown to induce chlorosis and necrosis during host plant infection, but also have antifungal activities. Two polyketide synthases, BOA6 and BOA9, are involved in the biosynthesis of botcinins. BOA6 mediates the formation of the per-methylated tetraketide core by condensation of four units of malonyl-CoA with one unit of acetyl-CoA, which would be methylated in activated methylene groups to yield a bicyclic acid intermediate that could then either be converted to botrylactone derivatives or lose the starter acetate unit through a retro-Claisen type C-C bond cleavage to yield botcinin derivatives. The second polyketide synthase, BOA9, is probably required for the biosynthesis of the tetraketide side chain of botcinins. The methyltransferase (MT) domain within BOA6 is probably responsible for the incorporation of four methyl groups. The trans-enoyl reductase BOA5 might take over the enoyl reductase function of BOA6 that misses an ER domain. The monooxygenases BOA2, BOA3 and BOA4 might be involved in further hydroxylations at C4, C5 and C8, whereas BOA7, close to BOA9, could potentially be involved in the hydroxylation at C4 in the side chain of botcinins. The protein is FAD-binding monooxygenase BOA2 of Botryotinia fuckeliana (strain B05.10) (Noble rot fungus).